A 190-amino-acid polypeptide reads, in one-letter code: Pyridoxal 5'-phosphate synthase subunit PdxT (190 aa).

Gly-46–Ser-48 contributes to the L-glutamine binding site. Cys-78 (nucleophile) is an active-site residue. L-glutamine contacts are provided by residues Arg-108 and Ile-137 to Arg-138. Catalysis depends on charge relay system residues His-174 and Glu-176.

It belongs to the glutaminase PdxT/SNO family. In terms of assembly, in the presence of PdxS, forms a dodecamer of heterodimers. Only shows activity in the heterodimer.

The catalysed reaction is aldehydo-D-ribose 5-phosphate + D-glyceraldehyde 3-phosphate + L-glutamine = pyridoxal 5'-phosphate + L-glutamate + phosphate + 3 H2O + H(+). It carries out the reaction L-glutamine + H2O = L-glutamate + NH4(+). It participates in cofactor biosynthesis; pyridoxal 5'-phosphate biosynthesis. Functionally, catalyzes the hydrolysis of glutamine to glutamate and ammonia as part of the biosynthesis of pyridoxal 5'-phosphate. The resulting ammonia molecule is channeled to the active site of PdxS. This chain is Pyridoxal 5'-phosphate synthase subunit PdxT, found in Chloroflexus aurantiacus (strain ATCC 29366 / DSM 635 / J-10-fl).